The sequence spans 793 residues: Caldesmon (793 aa).

Arginine 12 carries the phosphoserine modification. Glutamate 21 carries the post-translational modification Phosphotyrosine. Disordered stretches follow at residues 26–94 (AYQR…DDEA), 108–407 (QKRL…IKGE), and 434–458 (KKQG…KPTF). The myosin and calmodulin-binding stretch occupies residues 26 to 207 (AYQRNDDDEE…PKRGSIGENQ (182 aa)). Over residues 47–56 (QERLRQKQEE) the composition is skewed to basic and acidic residues. Residues 60–74 (GQVTDQVEVNAQNSV) show a composition bias toward polar residues. Positions 108–122 (QKRLQEALERQKEFD) are enriched in basic and acidic residues. At serine 129 the chain carries Phosphoserine. 2 stretches are compositionally biased toward basic and acidic residues: residues 146-162 (TTEK…RYEI) and 173-188 (QKND…KEDK). 2 positions are modified to phosphoserine: glutamate 196 and serine 202. Residues isoleucine 203 and glutamate 209 each participate in a glycyl lysine isopeptide (Lys-Gly) (interchain with G-Cter in SUMO2) cross-link. 2 stretches are compositionally biased toward basic and acidic residues: residues 236–407 (EEPK…IKGE) and 435–458 (KQGE…KPTF). 3 consecutive repeat copies span residues 319–332 (EEEK…QRIK), 333–346 (EEEK…QRIK), and 347–360 (EEEK…QRIK). A 3 X 14 AA tandem repeats of E-E-E-K-R-A-A-E-E-R-Q-R-I-K region spans residues 319–375 (EEEKRAAEERQRIKEEEKRAAEERQRIKEEEKRAAEERQRIKEEEKRAAEERQRARA). Residue lysine 459 forms a Glycyl lysine isopeptide (Lys-Gly) (interchain with G-Cter in SUMO2) linkage. The disordered stretch occupies residues 492–640 (KSQNGEFMTH…KKPFKCFTPK (149 aa)). Basic and acidic residues-rich tracts occupy residues 532–558 (AGKR…KQKQ) and 566–633 (EELK…DKKP). Residues 564–621 (ELEELKKKREERRKVLEEEEQRRKQEEADRKLREEEEKRRLKEEIERRRAEAAEKRQK) are tropomyosin-binding. A Phosphoserine modification is found at serine 643. A Glycyl lysine isopeptide (Lys-Gly) (interchain with G-Cter in SUMO2) cross-link involves residue lysine 645. The interval 653–686 (LNKSVQKSSGVKSTHQAAIVSKIDSRLEQYTSAI) is strong actin-binding. The residue at position 656 (serine 656) is a Phosphoserine. A tropomyosin-binding region spans residues 664–674 (KSTHQAAIVSK). Disordered regions lie at residues 687–706 (EGTK…PVPA), 721–740 (VFSS…GLKV), and 747–793 (NEWL…PTKV). Residues 716–722 (WEKGNVF) are calmodulin-binding. A compositionally biased stretch (polar residues) spans 721-733 (VFSSPTAAGTPNK). Serine 724 is modified (phosphoserine). Phosphothreonine occurs at positions 730 and 753. Serine 759 carries the phosphoserine modification. A compositionally biased stretch (basic and acidic residues) spans 765-784 (SDLRPGDVSSKRNLWEKQSV). The tract at residues 768-793 (RPGDVSSKRNLWEKQSVDKVTSPTKV) is weak actin-binding. Serine 789 is subject to Phosphoserine.

Belongs to the caldesmon family. In non-muscle cells, phosphorylation by CDK1 during mitosis causes caldesmon to dissociate from microfilaments. Phosphorylation reduces caldesmon binding to actin, myosin, and calmodulin as well as its inhibition of actomyosin ATPase activity. Phosphorylation also occurs in both quiescent and dividing smooth muscle cells with similar effects on the interaction with actin and calmodulin and on microfilaments reorganization. CDK1-mediated phosphorylation promotes Schwann cell migration during peripheral nerve regeneration. In terms of tissue distribution, high-molecular-weight caldesmon (isoform 1) is predominantly expressed in smooth muscles, whereas low-molecular-weight caldesmon (isoforms 2, 3, 4 and 5) are widely distributed in non-muscle tissues and cells. Not expressed in skeletal muscle or heart.

It is found in the cytoplasm. It localises to the cytoskeleton. The protein localises to the myofibril. Its subcellular location is the stress fiber. Its function is as follows. Actin- and myosin-binding protein implicated in the regulation of actomyosin interactions in smooth muscle and nonmuscle cells (could act as a bridge between myosin and actin filaments). Stimulates actin binding of tropomyosin which increases the stabilization of actin filament structure. In muscle tissues, inhibits the actomyosin ATPase by binding to F-actin. This inhibition is attenuated by calcium-calmodulin and is potentiated by tropomyosin. Interacts with actin, myosin, two molecules of tropomyosin and with calmodulin. Also plays an essential role during cellular mitosis and receptor capping. Involved in Schwann cell migration during peripheral nerve regeneration. The polypeptide is Caldesmon (CALD1) (Homo sapiens (Human)).